The primary structure comprises 436 residues: Eukaryotic peptide chain release factor subunit 1-1 (436 aa).

Belongs to the eukaryotic release factor 1 family. As to quaternary structure, heterodimer of two subunits, one of which binds GTP.

The protein localises to the cytoplasm. Directs the termination of nascent peptide synthesis (translation) in response to the termination codons UAA, UAG and UGA. Modulates plant growth and development. In Arabidopsis thaliana (Mouse-ear cress), this protein is Eukaryotic peptide chain release factor subunit 1-1 (ERF1-1).